The chain runs to 238 residues: 1-(5-phosphoribosyl)-5-[(5-phosphoribosylamino)methylideneamino] imidazole-4-carboxamide isomerase (238 aa).

D8 serves as the catalytic Proton acceptor. D130 serves as the catalytic Proton donor.

This sequence belongs to the HisA/HisF family.

The protein resides in the cytoplasm. It carries out the reaction 1-(5-phospho-beta-D-ribosyl)-5-[(5-phospho-beta-D-ribosylamino)methylideneamino]imidazole-4-carboxamide = 5-[(5-phospho-1-deoxy-D-ribulos-1-ylimino)methylamino]-1-(5-phospho-beta-D-ribosyl)imidazole-4-carboxamide. Its pathway is amino-acid biosynthesis; L-histidine biosynthesis; L-histidine from 5-phospho-alpha-D-ribose 1-diphosphate: step 4/9. The polypeptide is 1-(5-phosphoribosyl)-5-[(5-phosphoribosylamino)methylideneamino] imidazole-4-carboxamide isomerase (Methanococcus maripaludis (strain C7 / ATCC BAA-1331)).